A 311-amino-acid polypeptide reads, in one-letter code: Olfactory receptor 4S2 (311 aa).

Over 1–23 the chain is Extracellular; the sequence is MEKINNVTEFIFWGLSQSPEIEK. The N-linked (GlcNAc...) asparagine glycan is linked to N6. A helical transmembrane segment spans residues 24-47; sequence VCFVVFSFFYIIILLGNLLIMLTV. Over 48–55 the chain is Cytoplasmic; the sequence is CLSNLFKS. The chain crosses the membrane as a helical span at residues 56 to 77; sequence PMYFFLSFLSFVDICYSSVTAP. The Extracellular segment spans residues 78-98; it reads KMIVDLLAKDKTISYVGCMLQ. The cysteines at positions 95 and 187 are disulfide-linked. A helical transmembrane segment spans residues 99-118; that stretch reads LFGVHFFGCTEIFILTVMAY. Topologically, residues 119–137 are cytoplasmic; it reads DRYVAICKPLHYMTIMNRE. A helical membrane pass occupies residues 138-156; the sequence is TCNKMLLGTWVGGFLHSII. Residues 157 to 193 lie on the Extracellular side of the membrane; that stretch reads QVALVVQLPFCGPNEIDHYFCDVHPVLKLACTETYIV. The helical transmembrane segment at 194-217 threads the bilayer; that stretch reads GVVVTANSGTIALGSFVILLISYS. Over 218 to 233 the chain is Cytoplasmic; it reads IILVSLRKQSAEGRRK. The chain crosses the membrane as a helical span at residues 234 to 256; the sequence is ALSTCGSHIAMVVIFFGPCTFMY. Over 257–267 the chain is Extracellular; it reads MRPDTTFSEDK. Residues 268–287 form a helical membrane-spanning segment; the sequence is MVAVFYTIITPMLNPLIYTL. Over 288–311 the chain is Cytoplasmic; that stretch reads RNAEVKNAMKKLWGRNVFLEAKGK.

Belongs to the G-protein coupled receptor 1 family.

It localises to the cell membrane. Its function is as follows. Odorant receptor. This chain is Olfactory receptor 4S2 (OR4S2), found in Homo sapiens (Human).